Here is an 881-residue protein sequence, read N- to C-terminus: Valine--tRNA ligase (881 aa).

The short motif at Pro-42–His-52 is the 'HIGH' region element. The 'KMSKS' region motif lies at Lys-554 to Ser-558. Lys-557 lines the ATP pocket.

This sequence belongs to the class-I aminoacyl-tRNA synthetase family. ValS type 1 subfamily. As to quaternary structure, monomer.

It is found in the cytoplasm. The catalysed reaction is tRNA(Val) + L-valine + ATP = L-valyl-tRNA(Val) + AMP + diphosphate. Catalyzes the attachment of valine to tRNA(Val). As ValRS can inadvertently accommodate and process structurally similar amino acids such as threonine, to avoid such errors, it has a 'posttransfer' editing activity that hydrolyzes mischarged Thr-tRNA(Val) in a tRNA-dependent manner. The chain is Valine--tRNA ligase from Wigglesworthia glossinidia brevipalpis.